Here is a 210-residue protein sequence, read N- to C-terminus: Uridine kinase (210 aa).

An ATP-binding site is contributed by 14–21 (GGSGSGKT).

The protein belongs to the uridine kinase family.

Its subcellular location is the cytoplasm. It catalyses the reaction uridine + ATP = UMP + ADP + H(+). It carries out the reaction cytidine + ATP = CMP + ADP + H(+). Its pathway is pyrimidine metabolism; CTP biosynthesis via salvage pathway; CTP from cytidine: step 1/3. The protein operates within pyrimidine metabolism; UMP biosynthesis via salvage pathway; UMP from uridine: step 1/1. This chain is Uridine kinase, found in Deinococcus radiodurans (strain ATCC 13939 / DSM 20539 / JCM 16871 / CCUG 27074 / LMG 4051 / NBRC 15346 / NCIMB 9279 / VKM B-1422 / R1).